Here is a 115-residue protein sequence, read N- to C-terminus: Tyrosine-protein phosphatase 21 (115 aa).

The region spanning 1–115 (WLMIVEKECR…EIGGDAPMVV (115 aa)) is the Tyrosine-protein phosphatase domain. Asp-83 contributes to the substrate binding site.

This sequence belongs to the protein-tyrosine phosphatase family.

It carries out the reaction O-phospho-L-tyrosyl-[protein] + H2O = L-tyrosyl-[protein] + phosphate. The chain is Tyrosine-protein phosphatase 21 (STY-21) from Styela plicata (Wrinkled sea squirt).